A 154-amino-acid polypeptide reads, in one-letter code: 3-hydroxyacyl-[acyl-carrier-protein] dehydratase FabZ (154 aa).

His55 is a catalytic residue.

The protein belongs to the thioester dehydratase family. FabZ subfamily.

Its subcellular location is the cytoplasm. The enzyme catalyses a (3R)-hydroxyacyl-[ACP] = a (2E)-enoyl-[ACP] + H2O. Functionally, involved in unsaturated fatty acids biosynthesis. Catalyzes the dehydration of short chain beta-hydroxyacyl-ACPs and long chain saturated and unsaturated beta-hydroxyacyl-ACPs. This chain is 3-hydroxyacyl-[acyl-carrier-protein] dehydratase FabZ, found in Nitratidesulfovibrio vulgaris (strain DSM 19637 / Miyazaki F) (Desulfovibrio vulgaris).